The following is a 210-amino-acid chain: Ras-related protein RABC2a (210 aa).

20 to 27 lines the GTP pocket; that stretch reads GDSGVGKS. Residues 41 to 49 carry the Effector region motif; that stretch reads LAPTIGVDF. GTP-binding positions include 67-71, 127-130, and 157-158; these read DTAGQ, NKVD, and SA. Residues C208 and C209 are each lipidated (S-geranylgeranyl cysteine).

The protein belongs to the small GTPase superfamily. Rab family. Interacts with XI-2/MYA2.

Its subcellular location is the cell membrane. It localises to the cytoplasm. In terms of biological role, intracellular vesicle trafficking and protein transport. The chain is Ras-related protein RABC2a (RABC2A) from Arabidopsis thaliana (Mouse-ear cress).